Here is a 249-residue protein sequence, read N- to C-terminus: NAD kinase (249 aa).

The active-site Proton acceptor is D49. Residues D49–G50, R54, N115–E116, K126, R143, D145, I153, T156–S161, A180, and Q211 contribute to the NAD(+) site.

The protein belongs to the NAD kinase family. Homotetramer. A divalent metal cation serves as cofactor.

It localises to the cytoplasm. The enzyme catalyses NAD(+) + ATP = ADP + NADP(+) + H(+). Its function is as follows. Involved in the regulation of the intracellular balance between NAD(H) and NADP(H), and is a key enzyme in the biosynthesis of NADP. Catalyzes specifically the phosphorylation on 2'-hydroxyl of the adenosine moiety of NAD to yield NADP. This Archaeoglobus fulgidus (strain ATCC 49558 / DSM 4304 / JCM 9628 / NBRC 100126 / VC-16) protein is NAD kinase.